Reading from the N-terminus, the 434-residue chain is Trigger factor (434 aa).

Residues 163–248 (GDTAVIDFAG…VHDIKRKELP (86 aa)) enclose the PPIase FKBP-type domain.

The protein belongs to the FKBP-type PPIase family. Tig subfamily.

The protein resides in the cytoplasm. The catalysed reaction is [protein]-peptidylproline (omega=180) = [protein]-peptidylproline (omega=0). Functionally, involved in protein export. Acts as a chaperone by maintaining the newly synthesized protein in an open conformation. Functions as a peptidyl-prolyl cis-trans isomerase. The sequence is that of Trigger factor from Shouchella clausii (strain KSM-K16) (Alkalihalobacillus clausii).